Consider the following 508-residue polypeptide: Light-independent protochlorophyllide reductase subunit B (508 aa).

Position 36 (aspartate 36) interacts with [4Fe-4S] cluster. Residue aspartate 294 is the Proton donor of the active site. 429–430 (GM) lines the substrate pocket.

Belongs to the ChlB/BchB/BchZ family. Protochlorophyllide reductase is composed of three subunits; ChlL, ChlN and ChlB. Forms a heterotetramer of two ChlB and two ChlN subunits. The cofactor is [4Fe-4S] cluster.

It carries out the reaction chlorophyllide a + oxidized 2[4Fe-4S]-[ferredoxin] + 2 ADP + 2 phosphate = protochlorophyllide a + reduced 2[4Fe-4S]-[ferredoxin] + 2 ATP + 2 H2O. It participates in porphyrin-containing compound metabolism; chlorophyll biosynthesis (light-independent). In terms of biological role, component of the dark-operative protochlorophyllide reductase (DPOR) that uses Mg-ATP and reduced ferredoxin to reduce ring D of protochlorophyllide (Pchlide) to form chlorophyllide a (Chlide). This reaction is light-independent. The NB-protein (ChlN-ChlB) is the catalytic component of the complex. This is Light-independent protochlorophyllide reductase subunit B from Thermosynechococcus vestitus (strain NIES-2133 / IAM M-273 / BP-1).